We begin with the raw amino-acid sequence, 82 residues long: Small ribosomal subunit protein bS16 (82 aa).

Belongs to the bacterial ribosomal protein bS16 family.

This is Small ribosomal subunit protein bS16 from Aliivibrio fischeri (strain ATCC 700601 / ES114) (Vibrio fischeri).